Consider the following 264-residue polypeptide: S-adenosylmethionine decarboxylase proenzyme (264 aa).

Ser-112 acts as the Schiff-base intermediate with substrate; via pyruvic acid in catalysis. Ser-112 carries the pyruvic acid (Ser); by autocatalysis modification. The active-site Proton acceptor; for processing activity is the His-117. Residue Cys-140 is the Proton donor; for catalytic activity of the active site.

It belongs to the prokaryotic AdoMetDC family. Type 2 subfamily. In terms of assembly, heterooctamer of four alpha and four beta chains arranged as a tetramer of alpha/beta heterodimers. The cofactor is pyruvate. Post-translationally, is synthesized initially as an inactive proenzyme. Formation of the active enzyme involves a self-maturation process in which the active site pyruvoyl group is generated from an internal serine residue via an autocatalytic post-translational modification. Two non-identical subunits are generated from the proenzyme in this reaction, and the pyruvate is formed at the N-terminus of the alpha chain, which is derived from the carboxyl end of the proenzyme. The post-translation cleavage follows an unusual pathway, termed non-hydrolytic serinolysis, in which the side chain hydroxyl group of the serine supplies its oxygen atom to form the C-terminus of the beta chain, while the remainder of the serine residue undergoes an oxidative deamination to produce ammonia and the pyruvoyl group blocking the N-terminus of the alpha chain.

The catalysed reaction is S-adenosyl-L-methionine + H(+) = S-adenosyl 3-(methylsulfanyl)propylamine + CO2. The protein operates within amine and polyamine biosynthesis; S-adenosylmethioninamine biosynthesis; S-adenosylmethioninamine from S-adenosyl-L-methionine: step 1/1. Functionally, catalyzes the decarboxylation of S-adenosylmethionine to S-adenosylmethioninamine (dcAdoMet), the propylamine donor required for the synthesis of the polyamines spermine and spermidine from the diamine putrescine. This chain is S-adenosylmethionine decarboxylase proenzyme, found in Escherichia coli O127:H6 (strain E2348/69 / EPEC).